We begin with the raw amino-acid sequence, 358 residues long: Alanine racemase (358 aa).

Lysine 34 acts as the Proton acceptor; specific for D-alanine in catalysis. At lysine 34 the chain carries N6-(pyridoxal phosphate)lysine. Arginine 130 contributes to the substrate binding site. Tyrosine 254 acts as the Proton acceptor; specific for L-alanine in catalysis. Position 302 (methionine 302) interacts with substrate.

Belongs to the alanine racemase family. Pyridoxal 5'-phosphate serves as cofactor.

The catalysed reaction is L-alanine = D-alanine. It functions in the pathway amino-acid biosynthesis; D-alanine biosynthesis; D-alanine from L-alanine: step 1/1. Functionally, catalyzes the interconversion of L-alanine and D-alanine. May also act on other amino acids. The protein is Alanine racemase (alr) of Actinobacillus succinogenes (strain ATCC 55618 / DSM 22257 / CCUG 43843 / 130Z).